A 1293-amino-acid polypeptide reads, in one-letter code: Phosphoribosylformylglycinamidine synthase (1293 aa).

ATP-binding positions include 305-316 (GAATGSGGEIRD) and Ala-676. Positions 305 to 327 (GAATGSGGEIRDEGATGRGSKPK) are disordered. The Mg(2+) site is built by Asp-677, Glu-716, Asn-720, and Asp-884. Residue Ser-886 coordinates ATP. The Glutamine amidotransferase type-1 domain occupies 1040-1293 (MAILREQGVN…MFRNARVNLG (254 aa)). Cys-1133 functions as the Nucleophile in the catalytic mechanism. Residues His-1258 and Glu-1260 contribute to the active site.

The protein in the N-terminal section; belongs to the FGAMS family. In terms of assembly, monomer.

The protein resides in the cytoplasm. It catalyses the reaction N(2)-formyl-N(1)-(5-phospho-beta-D-ribosyl)glycinamide + L-glutamine + ATP + H2O = 2-formamido-N(1)-(5-O-phospho-beta-D-ribosyl)acetamidine + L-glutamate + ADP + phosphate + H(+). Its pathway is purine metabolism; IMP biosynthesis via de novo pathway; 5-amino-1-(5-phospho-D-ribosyl)imidazole from N(2)-formyl-N(1)-(5-phospho-D-ribosyl)glycinamide: step 1/2. In terms of biological role, phosphoribosylformylglycinamidine synthase involved in the purines biosynthetic pathway. Catalyzes the ATP-dependent conversion of formylglycinamide ribonucleotide (FGAR) and glutamine to yield formylglycinamidine ribonucleotide (FGAM) and glutamate. This Shewanella oneidensis (strain ATCC 700550 / JCM 31522 / CIP 106686 / LMG 19005 / NCIMB 14063 / MR-1) protein is Phosphoribosylformylglycinamidine synthase.